A 216-amino-acid polypeptide reads, in one-letter code: Thiamine-phosphate synthase (216 aa).

4-amino-2-methyl-5-(diphosphooxymethyl)pyrimidine-binding positions include 37–41 (QVRSK) and Asp-68. Positions 69 and 93 each coordinate Mg(2+). Thr-112 provides a ligand contact to 4-amino-2-methyl-5-(diphosphooxymethyl)pyrimidine. 140–142 (TPT) contributes to the 2-[(2R,5Z)-2-carboxy-4-methylthiazol-5(2H)-ylidene]ethyl phosphate binding site. Lys-143 serves as a coordination point for 4-amino-2-methyl-5-(diphosphooxymethyl)pyrimidine.

The protein belongs to the thiamine-phosphate synthase family. Mg(2+) is required as a cofactor.

It carries out the reaction 2-[(2R,5Z)-2-carboxy-4-methylthiazol-5(2H)-ylidene]ethyl phosphate + 4-amino-2-methyl-5-(diphosphooxymethyl)pyrimidine + 2 H(+) = thiamine phosphate + CO2 + diphosphate. It catalyses the reaction 2-(2-carboxy-4-methylthiazol-5-yl)ethyl phosphate + 4-amino-2-methyl-5-(diphosphooxymethyl)pyrimidine + 2 H(+) = thiamine phosphate + CO2 + diphosphate. The catalysed reaction is 4-methyl-5-(2-phosphooxyethyl)-thiazole + 4-amino-2-methyl-5-(diphosphooxymethyl)pyrimidine + H(+) = thiamine phosphate + diphosphate. The protein operates within cofactor biosynthesis; thiamine diphosphate biosynthesis; thiamine phosphate from 4-amino-2-methyl-5-diphosphomethylpyrimidine and 4-methyl-5-(2-phosphoethyl)-thiazole: step 1/1. Condenses 4-methyl-5-(beta-hydroxyethyl)thiazole monophosphate (THZ-P) and 2-methyl-4-amino-5-hydroxymethyl pyrimidine pyrophosphate (HMP-PP) to form thiamine monophosphate (TMP). The chain is Thiamine-phosphate synthase from Corynebacterium efficiens (strain DSM 44549 / YS-314 / AJ 12310 / JCM 11189 / NBRC 100395).